The primary structure comprises 209 residues: Chloramphenicol acetyltransferase (209 aa).

The Proton acceptor role is filled by His-189.

This sequence belongs to the chloramphenicol acetyltransferase family. As to quaternary structure, homotrimer.

The enzyme catalyses chloramphenicol + acetyl-CoA = chloramphenicol 3-acetate + CoA. Its function is as follows. This enzyme is an effector of chloramphenicol resistance in bacteria. This is Chloramphenicol acetyltransferase from Staphylococcus aureus.